The following is a 116-amino-acid chain: S-adenosylmethionine decarboxylase proenzyme (116 aa).

S63 (schiff-base intermediate with substrate; via pyruvic acid) is an active-site residue. S63 is subject to Pyruvic acid (Ser); by autocatalysis. Residue H68 is the Proton acceptor; for processing activity of the active site. The active-site Proton donor; for catalytic activity is C83.

Belongs to the prokaryotic AdoMetDC family. Type 1 subfamily. As to quaternary structure, heterotetramer of two alpha and two beta chains arranged as a dimer of alpha/beta heterodimers. Pyruvate is required as a cofactor. Is synthesized initially as an inactive proenzyme. Formation of the active enzyme involves a self-maturation process in which the active site pyruvoyl group is generated from an internal serine residue via an autocatalytic post-translational modification. Two non-identical subunits are generated from the proenzyme in this reaction, and the pyruvate is formed at the N-terminus of the alpha chain, which is derived from the carboxyl end of the proenzyme. The post-translation cleavage follows an unusual pathway, termed non-hydrolytic serinolysis, in which the side chain hydroxyl group of the serine supplies its oxygen atom to form the C-terminus of the beta chain, while the remainder of the serine residue undergoes an oxidative deamination to produce ammonia and the pyruvoyl group blocking the N-terminus of the alpha chain.

It catalyses the reaction S-adenosyl-L-methionine + H(+) = S-adenosyl 3-(methylsulfanyl)propylamine + CO2. It functions in the pathway amine and polyamine biosynthesis; S-adenosylmethioninamine biosynthesis; S-adenosylmethioninamine from S-adenosyl-L-methionine: step 1/1. Its function is as follows. Catalyzes the decarboxylation of S-adenosylmethionine to S-adenosylmethioninamine (dcAdoMet), the propylamine donor required for the synthesis of the polyamines spermine and spermidine from the diamine putrescine. The chain is S-adenosylmethionine decarboxylase proenzyme from Clostridium botulinum (strain 657 / Type Ba4).